A 161-amino-acid polypeptide reads, in one-letter code: Large ribosomal subunit protein uL10 (161 aa).

This sequence belongs to the universal ribosomal protein uL10 family. In terms of assembly, part of the ribosomal stalk of the 50S ribosomal subunit. The N-terminus interacts with L11 and the large rRNA to form the base of the stalk. The C-terminus forms an elongated spine to which L12 dimers bind in a sequential fashion forming a multimeric L10(L12)X complex.

Its function is as follows. Forms part of the ribosomal stalk, playing a central role in the interaction of the ribosome with GTP-bound translation factors. This chain is Large ribosomal subunit protein uL10, found in Sulfurovum sp. (strain NBC37-1).